The following is a 222-amino-acid chain: MAALAMRSGYLLRLSVALGPRSRSYRAPPPPRRRPGPHSPDPENLLTPRWQLTPRYVAKQFGRHGAISGVPPASLWPTPEQLRELEAEEQEWYPSLATMQESLRLQQQALEARRQAREQRIAECMAKMPQMIENWRKQKRERWEKIQADKERRARLQAEAQERLGYHVDPRSARFQELLQDLDKQQRKRLKEERQRQKKEARIAAMASAEAQDSAVSGEPSS.

Disordered stretches follow at residues 21–47 and 186–222; these read RSRS…NLLT and QRKR…EPSS. The stretch at 98-207 forms a coiled coil; it reads TMQESLRLQQ…KKEARIAAMA (110 aa). The short motif at 184 to 200 is the Nuclear localization signal element; it reads KQQRKRLKEERQRQKKE. Basic and acidic residues predominate over residues 186 to 202; that stretch reads QRKRLKEERQRQKKEAR. Over residues 203 to 215 the composition is skewed to low complexity; the sequence is IAAMASAEAQDSA.

This sequence belongs to the mitochondrion-specific ribosomal protein mL64 family. Component of the mitochondrial ribosome large subunit (39S) which comprises a 16S rRNA and about 50 distinct proteins. Interacts with GADD45A, GADD45B and GADD45G. Interacts with NR4A1 via the NR4A1 AB domain. Interacts with ATAD3A and ATAD3B.

The protein localises to the mitochondrion. Its subcellular location is the nucleus. In terms of biological role, acts as a negative regulator of G1 to S cell cycle phase progression by inhibiting cyclin-dependent kinases. Inhibitory effects are additive with GADD45 proteins but also occur in the absence of GADD45 proteins. Acts as a repressor of the orphan nuclear receptor NR4A1 by inhibiting AB domain-mediated transcriptional activity. May be involved in the hormone-mediated regulation of NR4A1 transcriptional activity. May play a role in mitochondrial protein synthesis. This Mus musculus (Mouse) protein is Large ribosomal subunit protein mL64 (Gadd45gip1).